The sequence spans 361 residues: Histidinol-phosphate aminotransferase (361 aa).

Position 224 is an N6-(pyridoxal phosphate)lysine (Lys-224).

The protein belongs to the class-II pyridoxal-phosphate-dependent aminotransferase family. Histidinol-phosphate aminotransferase subfamily. In terms of assembly, homodimer. Pyridoxal 5'-phosphate is required as a cofactor.

It catalyses the reaction L-histidinol phosphate + 2-oxoglutarate = 3-(imidazol-4-yl)-2-oxopropyl phosphate + L-glutamate. It functions in the pathway amino-acid biosynthesis; L-histidine biosynthesis; L-histidine from 5-phospho-alpha-D-ribose 1-diphosphate: step 7/9. The chain is Histidinol-phosphate aminotransferase from Bacillus licheniformis (strain ATCC 14580 / DSM 13 / JCM 2505 / CCUG 7422 / NBRC 12200 / NCIMB 9375 / NCTC 10341 / NRRL NRS-1264 / Gibson 46).